The primary structure comprises 206 residues: Outer-membrane lipoprotein carrier protein (206 aa).

Positions 1–20 (MFYLIKKLPKFILFSLYLYA) are cleaved as a signal peptide.

Belongs to the LolA family. In terms of assembly, monomer.

The protein localises to the periplasm. Functionally, participates in the translocation of lipoproteins from the inner membrane to the outer membrane. Only forms a complex with a lipoprotein if the residue after the N-terminal Cys is not an aspartate (The Asp acts as a targeting signal to indicate that the lipoprotein should stay in the inner membrane). This is Outer-membrane lipoprotein carrier protein from Wigglesworthia glossinidia brevipalpis.